Consider the following 400-residue polypeptide: Formate-dependent phosphoribosylglycinamide formyltransferase (400 aa).

N(1)-(5-phospho-beta-D-ribosyl)glycinamide-binding positions include 22 to 23 and Glu-82; that span reads EL. Residues Arg-115, Lys-156, 161–166, 196–199, and Glu-204 contribute to the ATP site; these read SSGKGQ and EGFI. In terms of domain architecture, ATP-grasp spans 120-309; that stretch reads RLAAETLGLP…EFALHARAIL (190 aa). Mg(2+)-binding residues include Glu-268 and Glu-280. Residues Asp-287, Lys-361, and 368 to 369 each bind N(1)-(5-phospho-beta-D-ribosyl)glycinamide; that span reads RR.

It belongs to the PurK/PurT family. As to quaternary structure, homodimer.

It catalyses the reaction N(1)-(5-phospho-beta-D-ribosyl)glycinamide + formate + ATP = N(2)-formyl-N(1)-(5-phospho-beta-D-ribosyl)glycinamide + ADP + phosphate + H(+). The protein operates within purine metabolism; IMP biosynthesis via de novo pathway; N(2)-formyl-N(1)-(5-phospho-D-ribosyl)glycinamide from N(1)-(5-phospho-D-ribosyl)glycinamide (formate route): step 1/1. In terms of biological role, involved in the de novo purine biosynthesis. Catalyzes the transfer of formate to 5-phospho-ribosyl-glycinamide (GAR), producing 5-phospho-ribosyl-N-formylglycinamide (FGAR). Formate is provided by PurU via hydrolysis of 10-formyl-tetrahydrofolate. In Xanthomonas axonopodis pv. citri (strain 306), this protein is Formate-dependent phosphoribosylglycinamide formyltransferase.